The chain runs to 262 residues: Hydroxyethylthiazole kinase (262 aa).

Residue Met41 participates in substrate binding. Residues Arg117 and Ser163 each contribute to the ATP site. Gly190 provides a ligand contact to substrate.

Belongs to the Thz kinase family. The cofactor is Mg(2+).

It catalyses the reaction 5-(2-hydroxyethyl)-4-methylthiazole + ATP = 4-methyl-5-(2-phosphooxyethyl)-thiazole + ADP + H(+). Its pathway is cofactor biosynthesis; thiamine diphosphate biosynthesis; 4-methyl-5-(2-phosphoethyl)-thiazole from 5-(2-hydroxyethyl)-4-methylthiazole: step 1/1. In terms of biological role, catalyzes the phosphorylation of the hydroxyl group of 4-methyl-5-beta-hydroxyethylthiazole (THZ). The polypeptide is Hydroxyethylthiazole kinase (Levilactobacillus brevis (strain ATCC 367 / BCRC 12310 / CIP 105137 / JCM 1170 / LMG 11437 / NCIMB 947 / NCTC 947) (Lactobacillus brevis)).